The chain runs to 229 residues: 2,3-bisphosphoglycerate-dependent phosphoglycerate mutase (229 aa).

Substrate is bound by residues 8-15, 21-22, Arg-60, 87-90, Lys-98, 114-115, and 183-184; these read RHGESAWN, TG, ERHY, RR, and GN. His-9 acts as the Tele-phosphohistidine intermediate in catalysis. Glu-87 acts as the Proton donor/acceptor in catalysis.

It belongs to the phosphoglycerate mutase family. BPG-dependent PGAM subfamily. In terms of assembly, homodimer.

The catalysed reaction is (2R)-2-phosphoglycerate = (2R)-3-phosphoglycerate. Its pathway is carbohydrate degradation; glycolysis; pyruvate from D-glyceraldehyde 3-phosphate: step 3/5. In terms of biological role, catalyzes the interconversion of 2-phosphoglycerate and 3-phosphoglycerate. The polypeptide is 2,3-bisphosphoglycerate-dependent phosphoglycerate mutase (Polynucleobacter asymbioticus (strain DSM 18221 / CIP 109841 / QLW-P1DMWA-1) (Polynucleobacter necessarius subsp. asymbioticus)).